A 603-amino-acid polypeptide reads, in one-letter code: Variable flagella 3 (603 aa).

Positions 169–289 form a coiled coil; that stretch reads GGEVSAELRR…TEDLEARDRR (121 aa). Over residues 288 to 297 the composition is skewed to basic and acidic residues; sequence RRMNSTDRIR. Disordered stretches follow at residues 288–526 and 539–564; these read RRMN…PARA and AGRG…SSKS. The segment covering 337-348 has biased composition (low complexity); that stretch reads SRSNSRGRGTSS. The segment covering 364 to 380 has biased composition (basic and acidic residues); the sequence is PRFDPTEYVRQRKERES. Polar residues predominate over residues 397-406; the sequence is AGTSRASSVV. Positions 486 to 510 are enriched in gly residues; the sequence is GASGGGAGGWSKFPGGGGGGVGGSG. Residues 511-520 are compositionally biased toward polar residues; sequence QRISSNSPRS.

This sequence belongs to the CCDC61 family.

The protein resides in the cytoplasm. It localises to the cytoskeleton. Its subcellular location is the flagellum basal body. Required for normal flagella and striated fiber formation. The chain is Variable flagella 3 from Chlamydomonas reinhardtii (Chlamydomonas smithii).